We begin with the raw amino-acid sequence, 42 residues long: uncharacterized protein (42 aa).

The protein resides in the cytoplasm. This is an uncharacterized protein from Escherichia coli (strain K12).